The primary structure comprises 269 residues: Lck-interacting transmembrane adapter 1 (269 aa).

The Extracellular portion of the chain corresponds to 1–7; it reads MRPPVPS. The helical; Signal-anchor for type III membrane protein transmembrane segment at 8–28 threads the bilayer; that stretch reads APLALWVLGCFSLLLWLWALC. Residues Cys28 and Cys31 are each lipidated (S-palmitoyl cysteine). Residues 29 to 269 lie on the Cytoplasmic side of the membrane; it reads TACHRKRAQR…VYESIKEMGL (241 aa). The tract at residues 102–133 is disordered; it reads STRSQVPNSAFPPRQLPRAPPAAPATAPSTSS. Residues 115–124 are compositionally biased toward pro residues; it reads RQLPRAPPAA. A phosphotyrosine mark is found at Tyr137, Tyr175, and Tyr207. The interval 137 to 140 is interaction with GRB2; that stretch reads YSNV. Interaction with CSK stretches follow at residues 175–178 and 207–210; these read YACI and YSRV. 2 positions are modified to phosphotyrosine; by LYN or LCK: Tyr242 and Tyr261. An interaction with LCK and PIK3R1 region spans residues 242 to 245; it reads YEAI. Residues 261-264 are interaction with LCK, PLCG2 and PIK3R1; the sequence is YESI. Ser263 is modified (phosphoserine).

As to quaternary structure, when phosphorylated in response to TCR stimulation and/or CD4 costimulation, interacts with LCK, CSK, FYN, PTPN11/SHP2, GRB2, PIK3R1 and GRAP2. When phosphorylated in response to BCR activation, interacts with LYN, PIK3R1, PLCG2 and GRB2. In terms of processing, palmitoylation of Cys-28 and Cys-31 is required for raft targeting. Phosphorylated on tyrosines upon TCR activation and/or CD4 coreceptor stimulation, or upon BCR stimulation; which leads to the recruitment of SH2-containing proteins. As to expression, expressed in spleen and lung. Present in primary B-cells and peripheral T-cells (at protein level).

It is found in the cell membrane. In terms of biological role, involved in BCR (B-cell antigen receptor)-mediated signaling in B-cells and TCR (T-cell antigen receptor)-mediated T-cell signaling in T-cells. In absence of TCR signaling, may be involved in CD4-mediated inhibition of T-cell activation. Couples activation of these receptors and their associated kinases with distal intracellular events such as calcium mobilization or MAPK activation through the recruitment of PLCG2, GRB2, GRAP2, and other signaling molecules. In Mus musculus (Mouse), this protein is Lck-interacting transmembrane adapter 1 (Lime1).